Here is a 126-residue protein sequence, read N- to C-terminus: MPEPAKSAPAPKKGSKKAVTKTQKKGDKKRRKTRKESYSIYVYKVLKQVHPDTGISSKAMGIMNSFVNDIFERIAGEASRLAHYNKRSTITSREIQTAVRLLLPGELAKHAVSEGTKAVTKYTSSK.

Over residues 1–12 (MPEPAKSAPAPK) the composition is skewed to low complexity. Positions 1–35 (MPEPAKSAPAPKKGSKKAVTKTQKKGDKKRRKTRK) are disordered. Residues Lys6 and Lys13 each carry the N6-acetyllysine modification. Basic residues predominate over residues 13–34 (KGSKKAVTKTQKKGDKKRRKTR). Residue Ser15 is modified to Phosphoserine. Residues Lys16 and Lys21 each carry the N6-acetyllysine modification. Ser113 carries O-linked (GlcNAc) serine glycosylation. Residue Lys121 forms a Glycyl lysine isopeptide (Lys-Gly) (interchain with G-Cter in ubiquitin) linkage.

This sequence belongs to the histone H2B family. The nucleosome is a histone octamer containing two molecules each of H2A, H2B, H3 and H4 assembled in one H3-H4 heterotetramer and two H2A-H2B heterodimers. The octamer wraps approximately 147 bp of DNA. Post-translationally, monoubiquitination of Lys-121 by the BRE1 gives a specific tag for epigenetic transcriptional activation and is also prerequisite for histone H3 'Lys-4' and 'Lys-79' methylation. In terms of processing, phosphorylated on Ser-15 during apoptosis; which facilitates apoptotic chromatin condensation. GlcNAcylation at Ser-113 promotes monoubiquitination of Lys-121. It fluctuates in response to extracellular glucose, and associates with transcribed genes.

The protein resides in the nucleus. It localises to the chromosome. In terms of biological role, core component of nucleosome. Nucleosomes wrap and compact DNA into chromatin, limiting DNA accessibility to the cellular machineries which require DNA as a template. Histones thereby play a central role in transcription regulation, DNA repair, DNA replication and chromosomal stability. DNA accessibility is regulated via a complex set of post-translational modifications of histones, also called histone code, and nucleosome remodeling. This is Histone H2B 8 (H2B-VIII) from Gallus gallus (Chicken).